A 430-amino-acid chain; its full sequence is MSGLARLRKTAFLMVSASANCRIQRYQSSRTEKHQDSTSANALLNHLIFKIKSTGPITVSEYMREVLTNPVKGYYMHHDMLGEHGDFVTSPELSQIFGELLGVWCISEWMSAGKPKSLQLVELGPGRGTLTDDLLRVFSNFGRLLNSCDISVHLVEVSPKLSDIQAQRLTGKAIEVELDKNSPVYKKGITKTGFPVCWYQDIQDVPTGFSFYIAHEFFDALPIHKLQKTKDGWREILIDIDPGIPDKLRFVLGPNVSLVANTFVQDDEPRDHVEVCPSAAVIIQKLANQINSYGGAALIADYGHMGERTDTFRGFRAHKLHDVLSNPGTADLTADVDFNFMRRIVGEAASCLGPVTQHEFLKNMGIDIRLKVLLEKSSDVAVQKQLIHGYNILMNADQMGQRFKFFSVVPQSRLKTTMPPVAGFSKLLMH.

The N-terminal 31 residues, 1–31, are a transit peptide targeting the mitochondrion; that stretch reads MSGLARLRKTAFLMVSASANCRIQRYQSSRT.

It belongs to the NDUFAF7 family.

It is found in the mitochondrion. It carries out the reaction L-arginyl-[protein] + 2 S-adenosyl-L-methionine = N(omega),N(omega)'-dimethyl-L-arginyl-[protein] + 2 S-adenosyl-L-homocysteine + 2 H(+). Arginine methyltransferase involved in the assembly or stability of mitochondrial NADH:ubiquinone oxidoreductase complex (complex I). Acts by mediating symmetric dimethylation of 'Arg-118' of ndufs2 after it assembles into the complex I, stabilizing the early intermediate complex. The sequence is that of Protein arginine methyltransferase NDUFAF7, mitochondrial from Xenopus tropicalis (Western clawed frog).